A 70-amino-acid polypeptide reads, in one-letter code: Large ribosomal subunit protein bL31 (70 aa).

Zn(2+)-binding residues include cysteine 16, cysteine 18, cysteine 37, and cysteine 40.

Belongs to the bacterial ribosomal protein bL31 family. Type A subfamily. As to quaternary structure, part of the 50S ribosomal subunit. Requires Zn(2+) as cofactor.

Binds the 23S rRNA. The chain is Large ribosomal subunit protein bL31 from Enterobacter sp. (strain 638).